The primary structure comprises 244 residues: 3-deoxy-manno-octulosonate cytidylyltransferase (244 aa).

Belongs to the KdsB family.

The protein localises to the cytoplasm. The enzyme catalyses 3-deoxy-alpha-D-manno-oct-2-ulosonate + CTP = CMP-3-deoxy-beta-D-manno-octulosonate + diphosphate. The protein operates within nucleotide-sugar biosynthesis; CMP-3-deoxy-D-manno-octulosonate biosynthesis; CMP-3-deoxy-D-manno-octulosonate from 3-deoxy-D-manno-octulosonate and CTP: step 1/1. Its pathway is bacterial outer membrane biogenesis; lipopolysaccharide biosynthesis. In terms of biological role, activates KDO (a required 8-carbon sugar) for incorporation into bacterial lipopolysaccharide in Gram-negative bacteria. The chain is 3-deoxy-manno-octulosonate cytidylyltransferase from Synechococcus elongatus (strain ATCC 33912 / PCC 7942 / FACHB-805) (Anacystis nidulans R2).